Reading from the N-terminus, the 474-residue chain is tRNA (guanine(37)-N(1))-methyltransferase (474 aa).

S-adenosyl-L-methionine contacts are provided by residues histidine 234, aspartate 274 to leucine 275, aspartate 303 to alanine 304, and asparagine 345. A compositionally biased stretch (acidic residues) spans glutamate 452 to glutamate 464. The tract at residues glutamate 452–threonine 474 is disordered. A compositionally biased stretch (basic and acidic residues) spans proline 465–threonine 474.

This sequence belongs to the class I-like SAM-binding methyltransferase superfamily. TRM5/TYW2 family. Monomer.

The protein localises to the mitochondrion matrix. It is found in the nucleus. It localises to the cytoplasm. It catalyses the reaction guanosine(37) in tRNA + S-adenosyl-L-methionine = N(1)-methylguanosine(37) in tRNA + S-adenosyl-L-homocysteine + H(+). Functionally, specifically methylates the N1 position of guanosine-37 in various cytoplasmic and mitochondrial tRNAs. Methylation is not dependent on the nature of the nucleoside 5' of the target nucleoside. This is the first step in the biosynthesis of wybutosine (yW), a modified base adjacent to the anticodon of tRNAs and required for accurate decoding. The protein is tRNA (guanine(37)-N(1))-methyltransferase of Caenorhabditis elegans.